The primary structure comprises 203 residues: MSNESIKAEQDLIQEGVESEVSTEEASLIDELTQANFRIEELEQLLADALAKVEEQKDSVIRAAAEVDNIRRRAAMDVEKANKFALEKFANELLPVLDNMERALQGTNPQDETTKAIYEGVELTQKSLLTAVAKFGVKPIDPQGQAFNPDQHQAIGMQPSAEFPANTVMLVMQKGYELNSRLLRPAMVMVSQGGPSQEINIEA.

Positions 1–10 are enriched in basic and acidic residues; the sequence is MSNESIKAEQ. Residues 1-20 are disordered; that stretch reads MSNESIKAEQDLIQEGVESE.

The protein belongs to the GrpE family. As to quaternary structure, homodimer.

It is found in the cytoplasm. In terms of biological role, participates actively in the response to hyperosmotic and heat shock by preventing the aggregation of stress-denatured proteins, in association with DnaK and GrpE. It is the nucleotide exchange factor for DnaK and may function as a thermosensor. Unfolded proteins bind initially to DnaJ; upon interaction with the DnaJ-bound protein, DnaK hydrolyzes its bound ATP, resulting in the formation of a stable complex. GrpE releases ADP from DnaK; ATP binding to DnaK triggers the release of the substrate protein, thus completing the reaction cycle. Several rounds of ATP-dependent interactions between DnaJ, DnaK and GrpE are required for fully efficient folding. The polypeptide is Protein GrpE (Shewanella sp. (strain MR-4)).